Reading from the N-terminus, the 286-residue chain is Polyamine aminopropyltransferase 1 (286 aa).

Residues 1–235 (MSDYQETLYQ…GAMTFAWGST (235 aa)) form the PABS domain. Q30 serves as a coordination point for S-methyl-5'-thioadenosine. The spermidine site is built by H61 and D85. S-methyl-5'-thioadenosine contacts are provided by residues E105 and 137–138 (DG). The active-site Proton acceptor is D155. 155-158 (DSTD) serves as a coordination point for spermidine. P162 serves as a coordination point for S-methyl-5'-thioadenosine.

This sequence belongs to the spermidine/spermine synthase family. In terms of assembly, homodimer or homotetramer.

The protein localises to the cytoplasm. It carries out the reaction S-adenosyl 3-(methylsulfanyl)propylamine + putrescine = S-methyl-5'-thioadenosine + spermidine + H(+). Its pathway is amine and polyamine biosynthesis; spermidine biosynthesis; spermidine from putrescine: step 1/1. Its function is as follows. Catalyzes the irreversible transfer of a propylamine group from the amino donor S-adenosylmethioninamine (decarboxy-AdoMet) to putrescine (1,4-diaminobutane) to yield spermidine. The sequence is that of Polyamine aminopropyltransferase 1 from Pseudomonas aeruginosa (strain ATCC 15692 / DSM 22644 / CIP 104116 / JCM 14847 / LMG 12228 / 1C / PRS 101 / PAO1).